Consider the following 480-residue polypeptide: Siroheme synthase 2 (480 aa).

The segment at 1 to 202 is precorrin-2 dehydrogenase /sirohydrochlorin ferrochelatase; the sequence is MDYLPMFARL…QDWQSAETWL (202 aa). NAD(+)-binding positions include 22 to 23 and 43 to 44; these read EV and PE. Position 126 is a phosphoserine (serine 126). The interval 214–480 is uroporphyrinogen-III C-methyltransferase; it reads GEVVLVGAGP…GCDLKLVNLA (267 aa). Proline 223 contributes to the S-adenosyl-L-methionine binding site. Catalysis depends on aspartate 246, which acts as the Proton acceptor. Lysine 268 acts as the Proton donor in catalysis. Residues 299-301, 329-330, methionine 381, and glycine 410 each bind S-adenosyl-L-methionine; these read GGD and TA.

The protein in the N-terminal section; belongs to the precorrin-2 dehydrogenase / sirohydrochlorin ferrochelatase family. This sequence in the C-terminal section; belongs to the precorrin methyltransferase family.

The catalysed reaction is uroporphyrinogen III + 2 S-adenosyl-L-methionine = precorrin-2 + 2 S-adenosyl-L-homocysteine + H(+). It carries out the reaction precorrin-2 + NAD(+) = sirohydrochlorin + NADH + 2 H(+). The enzyme catalyses siroheme + 2 H(+) = sirohydrochlorin + Fe(2+). Its pathway is cofactor biosynthesis; adenosylcobalamin biosynthesis; precorrin-2 from uroporphyrinogen III: step 1/1. It functions in the pathway cofactor biosynthesis; adenosylcobalamin biosynthesis; sirohydrochlorin from precorrin-2: step 1/1. The protein operates within porphyrin-containing compound metabolism; siroheme biosynthesis; precorrin-2 from uroporphyrinogen III: step 1/1. It participates in porphyrin-containing compound metabolism; siroheme biosynthesis; siroheme from sirohydrochlorin: step 1/1. Its pathway is porphyrin-containing compound metabolism; siroheme biosynthesis; sirohydrochlorin from precorrin-2: step 1/1. Multifunctional enzyme that catalyzes the SAM-dependent methylations of uroporphyrinogen III at position C-2 and C-7 to form precorrin-2 via precorrin-1. Then it catalyzes the NAD-dependent ring dehydrogenation of precorrin-2 to yield sirohydrochlorin. Finally, it catalyzes the ferrochelation of sirohydrochlorin to yield siroheme. The protein is Siroheme synthase 2 of Aeromonas salmonicida (strain A449).